The sequence spans 404 residues: Cysteine desulfurase IscS (404 aa).

Residues 75 to 76 (AT), N155, Q183, and 203 to 205 (SSH) each bind pyridoxal 5'-phosphate. Position 206 is an N6-(pyridoxal phosphate)lysine (K206). T243 serves as a coordination point for pyridoxal 5'-phosphate. The Cysteine persulfide intermediate role is filled by C328. C328 is a binding site for [2Fe-2S] cluster.

This sequence belongs to the class-V pyridoxal-phosphate-dependent aminotransferase family. NifS/IscS subfamily. In terms of assembly, homodimer. Forms a heterotetramer with IscU, interacts with other sulfur acceptors. Pyridoxal 5'-phosphate is required as a cofactor.

It is found in the cytoplasm. It carries out the reaction (sulfur carrier)-H + L-cysteine = (sulfur carrier)-SH + L-alanine. The protein operates within cofactor biosynthesis; iron-sulfur cluster biosynthesis. Its function is as follows. Master enzyme that delivers sulfur to a number of partners involved in Fe-S cluster assembly, tRNA modification or cofactor biosynthesis. Catalyzes the removal of elemental sulfur atoms from cysteine to produce alanine. Functions as a sulfur delivery protein for Fe-S cluster synthesis onto IscU, an Fe-S scaffold assembly protein, as well as other S acceptor proteins. The sequence is that of Cysteine desulfurase IscS from Haemophilus influenzae (strain PittGG).